A 313-amino-acid chain; its full sequence is MYTTKRFQQLLKEFEVALLLKFSKQLLLLGKIESYLNNGSSMKHEECKSQIYDCRMAVKIYVCSITANKSTNLKHFVRLFFLLGDSERVNLCIKRLIYTFIGSINSVIDKKEDIEQELYSSCMHCSIMSPKLQKVMLAQKSLILNKVFDYLFFLYGLSGTSILYTAGDHIRKLDFKDSGFITPFFQLLLLVLLFTLTFKSKHSLNAYSLTASQFSGHTVCNESSLKPNENSCDLNLSRTATIKLESAEDDACQRVLGLIKSYMRPRTLEELKLEFRFEHKSVQDITTCILDEVDGVQMARVLEINPDAPILAF.

The next 2 membrane-spanning stretches (helical) occupy residues 147 to 167 (VFDY…YTAG) and 178 to 198 (SGFI…TLTF).

The protein localises to the mitochondrion inner membrane. Its function is as follows. Has a role in meiosis. This is Meiotically up-regulated gene 100 protein, mitochondrial (mug100) from Schizosaccharomyces pombe (strain 972 / ATCC 24843) (Fission yeast).